Consider the following 1560-residue polypeptide: Tenascin-N (1560 aa).

A signal peptide spans 1-26 (MGLWGMLAFPLGFLLASVLLVASAPA). EGF-like domains follow at residues 167–198 (DQPT…VDCA), 199–229 (YAAC…EDCS), and 230–260 (EQRC…PDCS). 9 disulfides stabilise this stretch: Cys-171–Cys-181, Cys-175–Cys-186, Cys-188–Cys-197, Cys-202–Cys-212, Cys-206–Cys-217, Cys-219–Cys-228, Cys-233–Cys-243, Cys-237–Cys-248, and Cys-250–Cys-259. Fibronectin type-III domains follow at residues 264–353 (APQG…DLAV), 354–444 (VGTA…TEID), 445–532 (GPTN…TEID), 533–622 (SPEN…IDSP), 623–706 (KNLV…APTD), 709–798 (GPKN…IDSP), 799–882 (KNLV…APTD), 885–970 (GPKN…APTD), 973–1062 (SPKN…IDSP), 1063–1144 (KNLV…TKAP), 1149–1238 (SPKN…IDPP), and 1239–1325 (RNLR…VDAR). 2 disordered regions span residues 868–888 (GTQE…GPKN) and 1044–1063 (GARE…DSPK). The segment covering 1044 to 1061 (GARESKKANTEGHTDIDS) has biased composition (basic and acidic residues). Residues 1323-1540 (DARFPHPSDC…YVELKIRPFG (218 aa)) enclose the Fibrinogen C-terminal domain. N-linked (GlcNAc...) asparagine glycosylation is present at Asn-1411.

Belongs to the tenascin family. In terms of assembly, homohexamer. As to expression, highest expression in kidney followed by spleen and brain. In brain, highest expression is found in hippocampus, cerebellum and olfactory bulb. Expressed in aortic valve, corneal limbus. Expressed in ribs periosteum. During a fracture repair process, expression increases in cells of newly formed perichondrium/peristeum surrounding the cartalaginous callus.

It is found in the secreted. It localises to the extracellular space. The protein localises to the extracellular matrix. Its function is as follows. Extracellular matrix protein that seems to be a ligand for ITGA8:ITGB1, ITGAV:ITGB1 and ITGA4:ITGB1. Involved in neurite outgrowth and cell migration in hippocampal explants. During endochondral bone formation, inhibits proliferation and differentiation of proteoblasts mediated by canonical WNT signaling. In tumors, stimulates angiogenesis by elongation, migration and sprouting of endothelial cells. Expressed in most mammary tumors, may facilitate tumorigenesis by supporting the migratory behavior of breast cancer cells. The chain is Tenascin-N from Mus musculus (Mouse).